Reading from the N-terminus, the 182-residue chain is Photosystem I assembly protein Ycf4 (182 aa).

The next 2 helical transmembrane spans lie at Trp-22–Leu-42 and Val-63–Phe-83.

This sequence belongs to the Ycf4 family.

It is found in the plastid. Its subcellular location is the chloroplast thylakoid membrane. Functionally, seems to be required for the assembly of the photosystem I complex. In Oltmannsiellopsis viridis (Marine flagellate), this protein is Photosystem I assembly protein Ycf4.